The primary structure comprises 494 residues: Glycerol kinase (494 aa).

An ADP-binding site is contributed by Thr-13. ATP contacts are provided by Thr-13, Thr-14, and Ser-15. Thr-13 lines the sn-glycerol 3-phosphate pocket. Arg-17 lines the ADP pocket. The sn-glycerol 3-phosphate site is built by Arg-83, Glu-84, Tyr-135, and Asp-244. Glycerol-binding residues include Arg-83, Glu-84, Tyr-135, Asp-244, and Gln-245. Residues Thr-266 and Gly-309 each coordinate ADP. ATP contacts are provided by Thr-266, Gly-309, Gln-313, and Gly-410. ADP contacts are provided by Gly-410 and Asn-414.

The protein belongs to the FGGY kinase family.

It catalyses the reaction glycerol + ATP = sn-glycerol 3-phosphate + ADP + H(+). It functions in the pathway polyol metabolism; glycerol degradation via glycerol kinase pathway; sn-glycerol 3-phosphate from glycerol: step 1/1. With respect to regulation, inhibited by fructose 1,6-bisphosphate (FBP). Key enzyme in the regulation of glycerol uptake and metabolism. Catalyzes the phosphorylation of glycerol to yield sn-glycerol 3-phosphate. The protein is Glycerol kinase of Shewanella putrefaciens (strain CN-32 / ATCC BAA-453).